The chain runs to 615 residues: Medium-chain acyl-CoA ligase ACSF2, mitochondrial (615 aa).

Residues 1–41 constitute a mitochondrion transit peptide; it reads MAVYVGMLRLGRLCAGSSGVLGARAALSRSWQEARLQGVRF. An N6-acetyllysine modification is found at K179. K182 bears the N6-acetyllysine; alternate mark. Residue K182 is modified to N6-succinyllysine; alternate. 263–271 contacts ATP; the sequence is TSGTTGSPK. 2 positions are modified to N6-acetyllysine: K340 and K398. K478 is modified (N6-succinyllysine). Residues D493 and R508 each contribute to the ATP site. Residue K510 is modified to N6-acetyllysine. 2 positions are modified to N6-acetyllysine; alternate: K544 and K570. Residues K544 and K570 each carry the N6-succinyllysine; alternate modification. K599 contributes to the ATP binding site. The residue at position 599 (K599) is an N6-succinyllysine.

This sequence belongs to the ATP-dependent AMP-binding enzyme family.

Its subcellular location is the mitochondrion. The catalysed reaction is a medium-chain fatty acid + ATP + CoA = a medium-chain fatty acyl-CoA + AMP + diphosphate. It carries out the reaction octanoate + ATP + CoA = octanoyl-CoA + AMP + diphosphate. Acyl-CoA synthases catalyze the initial reaction in fatty acid metabolism, by forming a thioester with CoA. Has some preference toward medium-chain substrates. Plays a role in adipocyte differentiation. The chain is Medium-chain acyl-CoA ligase ACSF2, mitochondrial from Homo sapiens (Human).